A 362-amino-acid polypeptide reads, in one-letter code: Cobalt-precorrin-5B C(1)-methyltransferase (362 aa).

Belongs to the CbiD family.

It catalyses the reaction Co-precorrin-5B + S-adenosyl-L-methionine = Co-precorrin-6A + S-adenosyl-L-homocysteine. It functions in the pathway cofactor biosynthesis; adenosylcobalamin biosynthesis; cob(II)yrinate a,c-diamide from sirohydrochlorin (anaerobic route): step 6/10. Catalyzes the methylation of C-1 in cobalt-precorrin-5B to form cobalt-precorrin-6A. This Burkholderia thailandensis (strain ATCC 700388 / DSM 13276 / CCUG 48851 / CIP 106301 / E264) protein is Cobalt-precorrin-5B C(1)-methyltransferase.